The chain runs to 281 residues: Nuclear receptor-interacting protein 2 (281 aa).

Residues 18–85 are disordered; the sequence is ESCSTGQRQA…RAHLSQQRRL (68 aa). A compositionally biased stretch (pro residues) spans 36–47; that stretch reads TPPPSSPWPTPP. Residues 55 to 78 are compositionally biased toward basic and acidic residues; sequence QEARRDEGEARTRGQEAQLRDRAH. Positions 244-248 match the LXXLL motif motif; that stretch reads LQTLL.

As to quaternary structure, interacts with NR1F2, RARA and THRB in a ligand-dependent manner.

Its subcellular location is the nucleus. Functionally, down-regulates transcriptional activation by nuclear receptors such as NR1F2. The chain is Nuclear receptor-interacting protein 2 (NRIP2) from Homo sapiens (Human).